Here is a 438-residue protein sequence, read N- to C-terminus: 3-phosphoshikimate 1-carboxyvinyltransferase (438 aa).

3-phosphoshikimate is bound by residues lysine 26, serine 27, and arginine 31. Position 26 (lysine 26) interacts with phosphoenolpyruvate. Glycine 99 and arginine 127 together coordinate phosphoenolpyruvate. Serine 172, glutamine 174, aspartate 320, and lysine 347 together coordinate 3-phosphoshikimate. Phosphoenolpyruvate is bound at residue glutamine 174. Residue aspartate 320 is the Proton acceptor of the active site. Positions 351 and 392 each coordinate phosphoenolpyruvate.

Belongs to the EPSP synthase family. In terms of assembly, monomer.

The protein resides in the cytoplasm. The catalysed reaction is 3-phosphoshikimate + phosphoenolpyruvate = 5-O-(1-carboxyvinyl)-3-phosphoshikimate + phosphate. The protein operates within metabolic intermediate biosynthesis; chorismate biosynthesis; chorismate from D-erythrose 4-phosphate and phosphoenolpyruvate: step 6/7. Catalyzes the transfer of the enolpyruvyl moiety of phosphoenolpyruvate (PEP) to the 5-hydroxyl of shikimate-3-phosphate (S3P) to produce enolpyruvyl shikimate-3-phosphate and inorganic phosphate. The chain is 3-phosphoshikimate 1-carboxyvinyltransferase from Xanthomonas campestris pv. campestris (strain B100).